A 439-amino-acid polypeptide reads, in one-letter code: Choline monooxygenase, chloroplastic (439 aa).

The N-terminal 60 residues, 1–60 (MMAASASATTMLLKYPTTVCGIPNPSSNNNNDPSNNIVSIPQNTTNPTLKSRTPNKITTN), are a transit peptide targeting the chloroplast. The segment covering 24 to 41 (NPSSNNNNDPSNNIVSIP) has biased composition (low complexity). The segment at 24–54 (NPSSNNNNDPSNNIVSIPQNTTNPTLKSRTP) is disordered. Polar residues predominate over residues 42–54 (QNTTNPTLKSRTP). A Rieske domain is found at 120-227 (WQVAGISDQI…VAVWGPFVLI (108 aa)). [2Fe-2S] cluster is bound by residues C162, H164, C181, and H184. Fe cation contacts are provided by H287 and H292.

In terms of assembly, homotrimer or homodimer. It depends on [2Fe-2S] cluster as a cofactor. The cofactor is Fe cation. Mg(2+) serves as cofactor. In terms of tissue distribution, expressed in leaves.

It localises to the plastid. It is found in the chloroplast stroma. It carries out the reaction choline + 2 reduced [2Fe-2S]-[ferredoxin] + O2 + 2 H(+) = betaine aldehyde hydrate + 2 oxidized [2Fe-2S]-[ferredoxin] + H2O. Its pathway is amine and polyamine biosynthesis; betaine biosynthesis via choline pathway; betaine aldehyde from choline (monooxygenase route): step 1/1. In terms of biological role, catalyzes the first step of the osmoprotectant glycine betaine synthesis. This Spinacia oleracea (Spinach) protein is Choline monooxygenase, chloroplastic (CMO).